Reading from the N-terminus, the 454-residue chain is uncharacterized protein (454 aa).

125 to 132 (GDVGCGKT) contributes to the ATP binding site.

It belongs to the AFG1 ATPase family.

This is an uncharacterized protein from Schizosaccharomyces pombe (strain 972 / ATCC 24843) (Fission yeast).